Consider the following 688-residue polypeptide: Probable glucan endo-1,3-beta-glucosidase btgC (688 aa).

Disordered regions lie at residues 1-49 (MSGP…MNGQ), 61-91 (DGRQ…NLGP), and 169-194 (QLTP…DIPY). Residues 1 to 307 (MSGPNRTYSF…PKPGGGNKKR (307 aa)) lie on the Cytoplasmic side of the membrane. A compositionally biased stretch (polar residues) spans 175-188 (SVSHLSSTNPSQRN). A helical; Signal-anchor for type II membrane protein transmembrane segment spans residues 308 to 328 (GWIVGAILAFIIIGAIVGGAV). The Extracellular segment spans residues 329–688 (GGTIGHRGNE…IPDCGGKTAT (360 aa)). Residues 334–363 (HRGNEEPSSASSASSSSTQTATEDTSVNGD) are disordered. Over residues 341–355 (SSASSASSSSTQTAT) the composition is skewed to low complexity. Residues asparagine 408, asparagine 431, and asparagine 459 are each glycosylated (N-linked (GlcNAc...) asparagine). The Proton donor role is filled by glutamate 491. Glutamate 590 functions as the Nucleophile in the catalytic mechanism. N-linked (GlcNAc...) asparagine glycans are attached at residues asparagine 609 and asparagine 635.

The protein belongs to the glycosyl hydrolase 17 family.

It is found in the cell membrane. The enzyme catalyses Hydrolysis of (1-&gt;3)-beta-D-glucosidic linkages in (1-&gt;3)-beta-D-glucans.. In terms of biological role, glucanases play a role in cell expansion during growth, in cell-cell fusion during mating, and in spore release during sporulation. This enzyme may be involved in beta-glucan degradation. Active on laminarin and lichenan. This chain is Probable glucan endo-1,3-beta-glucosidase btgC (btgC), found in Aspergillus fumigatus (strain CBS 144.89 / FGSC A1163 / CEA10) (Neosartorya fumigata).